A 205-amino-acid polypeptide reads, in one-letter code: Small ribosomal subunit protein uS4 (205 aa).

Residues 27–46 are disordered; sequence LNKRDYAPGQHGQRRKGKPS. Positions 118–178 constitute an S4 RNA-binding domain; sequence HGHVLVNGKR…HVDHRLMKGT (61 aa).

The protein belongs to the universal ribosomal protein uS4 family. As to quaternary structure, part of the 30S ribosomal subunit. Contacts protein S5. The interaction surface between S4 and S5 is involved in control of translational fidelity.

Functionally, one of the primary rRNA binding proteins, it binds directly to 16S rRNA where it nucleates assembly of the body of the 30S subunit. Its function is as follows. With S5 and S12 plays an important role in translational accuracy. This is Small ribosomal subunit protein uS4 from Granulibacter bethesdensis (strain ATCC BAA-1260 / CGDNIH1).